The sequence spans 131 residues: Holo-[acyl-carrier-protein] synthase (131 aa).

D8 and E59 together coordinate Mg(2+).

Belongs to the P-Pant transferase superfamily. AcpS family. The cofactor is Mg(2+).

Its subcellular location is the cytoplasm. It catalyses the reaction apo-[ACP] + CoA = holo-[ACP] + adenosine 3',5'-bisphosphate + H(+). Its function is as follows. Transfers the 4'-phosphopantetheine moiety from coenzyme A to a Ser of acyl-carrier-protein. In Paramagnetospirillum magneticum (strain ATCC 700264 / AMB-1) (Magnetospirillum magneticum), this protein is Holo-[acyl-carrier-protein] synthase.